Reading from the N-terminus, the 172-residue chain is 18.6 kDa class III heat shock protein (172 aa).

Positions 29–54 (RRSAGDHAHHAAHGHGQHRISGIGGG) are disordered. In terms of domain architecture, sHSP spans 48–172 (ISGIGGGAPV…KTKSVQVTIA (125 aa)).

Belongs to the small heat shock protein (HSP20) family. In terms of assembly, may form oligomeric structures.

The protein localises to the cytoplasm. The polypeptide is 18.6 kDa class III heat shock protein (HSP18.6) (Oryza sativa subsp. japonica (Rice)).